Consider the following 868-residue polypeptide: Phospholipase D delta (868 aa).

Residues 1-154 enclose the C2 domain; sequence MAEKVSEDVM…ASGERISGWF (154 aa). Position 216 (Asp216) interacts with Ca(2+). Positions 368–403 constitute a PLD phosphodiesterase 1 domain; sequence TLFTHHQKCVLVDTQAVGNNRKVTAFIGGLDLCDGR. Catalysis depends on residues His373, Lys375, and Asp380. His373 serves as a coordination point for a 1,2-diacyl-sn-glycero-3-phosphate. His409 and His440 together coordinate Ca(2+). Positions 588 and 718 each coordinate a 1,2-diacyl-sn-glycero-3-phosphate. The PLD phosphodiesterase 2 domain maps to 713–740; it reads FMIYVHAKGMIVDDEYVLMGSANINQRS. Catalysis depends on residues His718, Lys720, and Asp725. Glu781 is a binding site for Ca(2+).

This sequence belongs to the phospholipase D family. C2-PLD subfamily. Interacts with GAPC1 and GAPC2. Increased interaction in the presence of H(2)O(2). Requires Ca(2+) as cofactor. As to expression, expressed in roots, leaves, stems, siliques and flowers. Strongly expressed in the vascular tissues of cotyledons and leaves under dehydration stress conditions. Expression is higher in old leaves than in young leaves. Expressed in leaves and guard cells. The isoform 2 may not be present in siliques.

The protein localises to the cell membrane. It catalyses the reaction a 1,2-diacyl-sn-glycero-3-phosphocholine + H2O = a 1,2-diacyl-sn-glycero-3-phosphate + choline + H(+). Activated by free oleic acid in a dose-dependent manner and less effectively by other unsaturated fatty acids such as linoleic and linolenic acids. Not activated by the saturated fatty acids stearic and palmitic acids. PIP2 and Ca(2+) stimulate activity by promoting lipid substrate binding to the active site. Activated by H(2)O(2) and by binding to GAPC. Its function is as follows. Hydrolyzes glycerol-phospholipids at the terminal phosphodiesteric bond to generate phosphatidic acids (PA). May be involved in PA accumulation in the dehydration stress response and in the transduction of hormonal and environmental signals to the microtubules cytoskeleton. Prefers phosphatidylethanolamine to phosphatidylcholine as substrate. Involved in H(2)O(2) and abscisic acid (ABA)-induced stomatal closure. Involved in nitric oxide (NO) signaling during stomatal closure. Plays a positive role in ABA-promoted senescence. Involved in basal defense and nonhost resistance. The chain is Phospholipase D delta from Arabidopsis thaliana (Mouse-ear cress).